The chain runs to 494 residues: Glutamyl-tRNA(Gln) amidotransferase subunit A (494 aa).

Residues lysine 79 and serine 159 each act as charge relay system in the active site. Serine 183 serves as the catalytic Acyl-ester intermediate.

This sequence belongs to the amidase family. GatA subfamily. Heterotrimer of A, B and C subunits.

It carries out the reaction L-glutamyl-tRNA(Gln) + L-glutamine + ATP + H2O = L-glutaminyl-tRNA(Gln) + L-glutamate + ADP + phosphate + H(+). Allows the formation of correctly charged Gln-tRNA(Gln) through the transamidation of misacylated Glu-tRNA(Gln) in organisms which lack glutaminyl-tRNA synthetase. The reaction takes place in the presence of glutamine and ATP through an activated gamma-phospho-Glu-tRNA(Gln). The sequence is that of Glutamyl-tRNA(Gln) amidotransferase subunit A from Bartonella tribocorum (strain CIP 105476 / IBS 506).